A 462-amino-acid polypeptide reads, in one-letter code: CUGBP Elav-like family member 3-B (462 aa).

3 consecutive RRM domains span residues 7-88, 95-175, and 377-455; these read IKLF…PADS, RKLF…FADT, and CNIF…LKRP.

It belongs to the CELF/BRUNOL family.

It localises to the nucleus. It is found in the cytoplasm. Functionally, RNA-binding protein that may be involved in the regulation of pre-mRNA alternative splicing. This is CUGBP Elav-like family member 3-B (tnrc4-b) from Xenopus laevis (African clawed frog).